The following is a 117-amino-acid chain: Large ribosomal subunit protein bL20 (117 aa).

It belongs to the bacterial ribosomal protein bL20 family.

In terms of biological role, binds directly to 23S ribosomal RNA and is necessary for the in vitro assembly process of the 50S ribosomal subunit. It is not involved in the protein synthesizing functions of that subunit. The sequence is that of Large ribosomal subunit protein bL20 from Rickettsia typhi (strain ATCC VR-144 / Wilmington).